We begin with the raw amino-acid sequence, 353 residues long: Probable peptidoglycan glycosyltransferase FtsW (353 aa).

8 helical membrane-spanning segments follow: residues isoleucine 26–phenylalanine 46, leucine 53–histidine 73, phenylalanine 115–glutamate 135, aspartate 137–valine 157, phenylalanine 162–tyrosine 182, isoleucine 242–isoleucine 262, isoleucine 288–proline 308, and leucine 314–leucine 334.

Belongs to the SEDS family. FtsW subfamily.

Its subcellular location is the cell inner membrane. It catalyses the reaction [GlcNAc-(1-&gt;4)-Mur2Ac(oyl-L-Ala-gamma-D-Glu-L-Lys-D-Ala-D-Ala)](n)-di-trans,octa-cis-undecaprenyl diphosphate + beta-D-GlcNAc-(1-&gt;4)-Mur2Ac(oyl-L-Ala-gamma-D-Glu-L-Lys-D-Ala-D-Ala)-di-trans,octa-cis-undecaprenyl diphosphate = [GlcNAc-(1-&gt;4)-Mur2Ac(oyl-L-Ala-gamma-D-Glu-L-Lys-D-Ala-D-Ala)](n+1)-di-trans,octa-cis-undecaprenyl diphosphate + di-trans,octa-cis-undecaprenyl diphosphate + H(+). It functions in the pathway cell wall biogenesis; peptidoglycan biosynthesis. Functionally, peptidoglycan polymerase that is essential for cell division. This Buchnera aphidicola subsp. Schizaphis graminum (strain Sg) protein is Probable peptidoglycan glycosyltransferase FtsW.